Here is a 347-residue protein sequence, read N- to C-terminus: NADH-ubiquinone oxidoreductase chain 2 (347 aa).

11 helical membrane passes run 3 to 23, 25 to 45, 59 to 79, 96 to 116, 122 to 142, 149 to 169, 178 to 198, 201 to 221, 239 to 259, 274 to 294, and 326 to 346; these read PMIL…VMMS, HWFL…PVLM, YFLT…INLI, TLLT…FWVP, VSLN…LSLL, VNTN…GWGG, IMAY…IYNP, SLLN…LLMF, IITT…PLSG, DSVI…FFYM, and MTSL…AMIL.

Belongs to the complex I subunit 2 family. Core subunit of respiratory chain NADH dehydrogenase (Complex I) which is composed of 45 different subunits. Interacts with TMEM242.

Its subcellular location is the mitochondrion inner membrane. It carries out the reaction a ubiquinone + NADH + 5 H(+)(in) = a ubiquinol + NAD(+) + 4 H(+)(out). Core subunit of the mitochondrial membrane respiratory chain NADH dehydrogenase (Complex I) which catalyzes electron transfer from NADH through the respiratory chain, using ubiquinone as an electron acceptor. Essential for the catalytic activity and assembly of complex I. The sequence is that of NADH-ubiquinone oxidoreductase chain 2 from Sylvisorex johnstoni (Johnston's forest shrew).